The following is a 591-amino-acid chain: Maintenance of mitochondrial morphology protein 1 (591 aa).

Over 1-83 (MGFNIPWNGT…AQPSLSFTQG (83 aa)) the chain is Lumenal. Residues 84–104 (LLVGQLSVVLLIGAFIKFFIF) form a helical membrane-spanning segment. Residues 105-591 (GEAPPPPSRS…GSMPDSVAVT (487 aa)) are Cytoplasmic-facing. Disordered regions lie at residues 138–159 (PRTL…SSST), 170–189 (YSAT…VHHS), 334–398 (PGTS…KHAH), and 479–591 (EAEA…VAVT). Composition is skewed to polar residues over residues 146–159 (STSN…SSST) and 170–179 (YSATPTNPTS). Basic residues predominate over residues 180-189 (KHGRSRVHHS). One can recognise an SMP-LTD domain in the interval 192–462 (QPESLDWFNV…EPRVQVVGLP (271 aa)). The segment covering 336–371 (TSDQTMGPSASPPNQSTSTETASINDQTSEGQSTQR) has biased composition (polar residues). Over residues 379–389 (PTNSTPTAATA) the composition is skewed to low complexity. Composition is skewed to gly residues over residues 496–525 (TAGG…GMGY) and 536–550 (GDGG…GAGG). Basic and acidic residues predominate over residues 563-578 (GGDDGEGPGRRSDERF).

It belongs to the MMM1 family. Homodimer. Component of the ER-mitochondria encounter structure (ERMES) or MDM complex, composed of MMM1, MDM10, MDM12 and MDM34. An MMM1 homodimer associates with one molecule of MDM12 on each side in a pairwise head-to-tail manner, and the SMP-LTD domains of MMM1 and MDM12 generate a continuous hydrophobic tunnel for phospholipid trafficking.

The protein resides in the endoplasmic reticulum membrane. Component of the ERMES/MDM complex, which serves as a molecular tether to connect the endoplasmic reticulum (ER) and mitochondria. Components of this complex are involved in the control of mitochondrial shape and protein biogenesis, and function in nonvesicular lipid trafficking between the ER and mitochondria. The MDM12-MMM1 subcomplex functions in the major beta-barrel assembly pathway that is responsible for biogenesis of all outer membrane beta-barrel proteins, and acts in a late step after the SAM complex. The MDM10-MDM12-MMM1 subcomplex further acts in the TOM40-specific pathway after the action of the MDM12-MMM1 complex. Essential for establishing and maintaining the structure of mitochondria and maintenance of mtDNA nucleoids. The polypeptide is Maintenance of mitochondrial morphology protein 1 (Ajellomyces capsulatus (strain G186AR / H82 / ATCC MYA-2454 / RMSCC 2432) (Darling's disease fungus)).